Consider the following 1770-residue polypeptide: Transposon Ty2-DR3 Gag-Pol polyprotein (1770 aa).

Polar residues-rich tracts occupy residues 1–11, 19–39, 49–60, 366–390, 399–408, and 415–435; these read MESQQLHQNPH, ASVT…SASN, KVNSQQETTPGT, VSRT…NSSK, IATSSKFSRV, and ESTV…GQQQ. Disordered stretches follow at residues 1–89 and 355–449; these read MESQ…QQHG and SQYK…SNDE. The segment at 295 to 397 is RNA-binding; it reads ENNINVSDRL…SSKPRAAKAH (103 aa). Catalysis depends on Asp457, which acts as the For protease activity; shared with dimeric partner. An integrase-type zinc finger-like region spans residues 579–636; that stretch reads NVNKSKSVNKYPYPLIHRMLGHANFRSIQKSLKKNAVTYLKESDIEWSNASTYQCPDC. Residues 656–831 form the Integrase catalytic domain; that stretch reads ESYEPFQYLH…AGLDITTILP (176 aa). Residues Asp667 and Asp732 each coordinate Mg(2+). Disordered stretches follow at residues 1005–1038 and 1057–1205; these read GGTI…MIDL and GGTE…TEIE. 2 stretches are compositionally biased toward polar residues: residues 1009–1024 and 1065–1082; these read ESDT…FTAR and QRNS…STPS. The short motif at 1193 to 1227 is the Bipartite nuclear localization signal element; the sequence is KKRSLEDNETEIEVSRDTWNNKNMRSLEPPRSKKR. One can recognise a Reverse transcriptase Ty1/copia-type domain in the interval 1353–1491; the sequence is NDYYITQLDI…DILGLEIKYQ (139 aa). Positions 1361, 1442, 1443, 1625, 1667, and 1700 each coordinate Mg(2+). The region spanning 1625-1767 is the RNase H Ty1/copia-type domain; sequence DASYGNQPYY…IKTFKLLTNK (143 aa).

The capsid protein forms a homotrimer, from which the VLPs are assembled. The protease is a homodimer, whose active site consists of two apposed aspartic acid residues. Post-translationally, initially, virus-like particles (VLPs) are composed of the structural unprocessed proteins Gag and Gag-Pol, and also contain the host initiator methionine tRNA (tRNA(i)-Met) which serves as a primer for minus-strand DNA synthesis, and a dimer of genomic Ty RNA. Processing of the polyproteins occurs within the particle and proceeds by an ordered pathway, called maturation. First, the protease (PR) is released by autocatalytic cleavage of the Gag-Pol polyprotein, and this cleavage is a prerequisite for subsequent processing at the remaining sites to release the mature structural and catalytic proteins. Maturation takes place prior to the RT reaction and is required to produce transposition-competent VLPs.

It is found in the cytoplasm. Its subcellular location is the nucleus. The enzyme catalyses DNA(n) + a 2'-deoxyribonucleoside 5'-triphosphate = DNA(n+1) + diphosphate. It carries out the reaction Endonucleolytic cleavage to 5'-phosphomonoester.. Its function is as follows. Capsid protein (CA) is the structural component of the virus-like particle (VLP), forming the shell that encapsulates the retrotransposons dimeric RNA genome. The particles are assembled from trimer-clustered units and there are holes in the capsid shells that allow for the diffusion of macromolecules. CA also has nucleocapsid-like chaperone activity, promoting primer tRNA(i)-Met annealing to the multipartite primer-binding site (PBS), dimerization of Ty2 RNA and initiation of reverse transcription. The aspartyl protease (PR) mediates the proteolytic cleavages of the Gag and Gag-Pol polyproteins after assembly of the VLP. Functionally, reverse transcriptase/ribonuclease H (RT) is a multifunctional enzyme that catalyzes the conversion of the retro-elements RNA genome into dsDNA within the VLP. The enzyme displays a DNA polymerase activity that can copy either DNA or RNA templates, and a ribonuclease H (RNase H) activity that cleaves the RNA strand of RNA-DNA heteroduplexes during plus-strand synthesis and hydrolyzes RNA primers. The conversion leads to a linear dsDNA copy of the retrotransposon that includes long terminal repeats (LTRs) at both ends. In terms of biological role, integrase (IN) targets the VLP to the nucleus, where a subparticle preintegration complex (PIC) containing at least integrase and the newly synthesized dsDNA copy of the retrotransposon must transit the nuclear membrane. Once in the nucleus, integrase performs the integration of the dsDNA into the host genome. The protein is Transposon Ty2-DR3 Gag-Pol polyprotein (TY2B-DR3) of Saccharomyces cerevisiae (strain ATCC 204508 / S288c) (Baker's yeast).